We begin with the raw amino-acid sequence, 369 residues long: S-(hydroxymethyl)glutathione dehydrogenase (369 aa).

7 residues coordinate Zn(2+): Cys-40, His-62, Cys-92, Cys-95, Cys-98, Cys-106, and Cys-169.

Belongs to the zinc-containing alcohol dehydrogenase family. Class-III subfamily. Homodimer. Requires Zn(2+) as cofactor.

It localises to the cytoplasm. It catalyses the reaction S-(hydroxymethyl)glutathione + NADP(+) = S-formylglutathione + NADPH + H(+). It carries out the reaction S-(hydroxymethyl)glutathione + NAD(+) = S-formylglutathione + NADH + H(+). The catalysed reaction is a primary alcohol + NAD(+) = an aldehyde + NADH + H(+). The enzyme catalyses a secondary alcohol + NAD(+) = a ketone + NADH + H(+). It catalyses the reaction S-nitrosoglutathione + NADH + H(+) = S-(hydroxysulfenamide)glutathione + NAD(+). Functionally, has high formaldehyde dehydrogenase activity in the presence of glutathione and catalyzes the oxidation of normal alcohols in a reaction that is not GSH-dependent. In addition, hemithiolacetals other than those formed from GSH, including omega-thiol fatty acids, also are substrates. Also acts as a S-nitroso-glutathione reductase by catalyzing the NADH-dependent reduction of S-nitrosoglutathione. The protein is S-(hydroxymethyl)glutathione dehydrogenase (frmA) of Synechocystis sp. (strain ATCC 27184 / PCC 6803 / Kazusa).